Here is a 519-residue protein sequence, read N- to C-terminus: ATP synthase subunit alpha (519 aa).

An ATP-binding site is contributed by 174–181 (GDRQTGKT).

It belongs to the ATPase alpha/beta chains family. As to quaternary structure, F-type ATPases have 2 components, CF(1) - the catalytic core - and CF(0) - the membrane proton channel. CF(1) has five subunits: alpha(3), beta(3), gamma(1), delta(1), epsilon(1). CF(0) has three main subunits: a(1), b(2) and c(9-12). The alpha and beta chains form an alternating ring which encloses part of the gamma chain. CF(1) is attached to CF(0) by a central stalk formed by the gamma and epsilon chains, while a peripheral stalk is formed by the delta and b chains.

Its subcellular location is the cell inner membrane. It carries out the reaction ATP + H2O + 4 H(+)(in) = ADP + phosphate + 5 H(+)(out). Produces ATP from ADP in the presence of a proton gradient across the membrane. The alpha chain is a regulatory subunit. The polypeptide is ATP synthase subunit alpha (Acidovorax ebreus (strain TPSY) (Diaphorobacter sp. (strain TPSY))).